We begin with the raw amino-acid sequence, 310 residues long: MSTVSSSRGSAPRLLAIVGPTGTGKSELAVDLAEELGGEVVNADAMQLYKGMDIGTAKLTTAERRGVPHHLLDVLDVTETASVAAYQRHARHAVEELLEAGRTPLLVGGSGLYVQAVLDDLAFPGTDEQVRARWEEELHLHGAAVLHRRLRELDPVAADAILPTNGRRLVRALEVIEITGRPFSAHLPKPGPPRYGAVLVGLDREVAELDDRIDLRVTRMFDNGLVEEVRELEKQGLRRGRTASRALGYQQVLAELDGAGDMAAAAAETAKLHRRFVRRQRSWFRRDKRIHWFDAARPGLAGDVRALLDT.

Residue 19 to 26 coordinates ATP; sequence GPTGTGKS. 21-26 contributes to the substrate binding site; the sequence is TGTGKS.

The protein belongs to the IPP transferase family. Monomer. Mg(2+) is required as a cofactor.

The enzyme catalyses adenosine(37) in tRNA + dimethylallyl diphosphate = N(6)-dimethylallyladenosine(37) in tRNA + diphosphate. Its function is as follows. Catalyzes the transfer of a dimethylallyl group onto the adenine at position 37 in tRNAs that read codons beginning with uridine, leading to the formation of N6-(dimethylallyl)adenosine (i(6)A). The polypeptide is tRNA dimethylallyltransferase (Saccharopolyspora erythraea (strain ATCC 11635 / DSM 40517 / JCM 4748 / NBRC 13426 / NCIMB 8594 / NRRL 2338)).